The primary structure comprises 430 residues: MAEKILENKDPKLEAMTVDHEVSAPKPIPVDEPTLTRVARPLRHVRHIPVKSLVFHSKHGPITFSYENKIKLPISKNKLVVQVNYVGLNPVDMKIRNGYTKPIYGEAGIGREYSGVITHVGDNLTNRWNVGDDVYGIYYHPKLAIGALQSSLLIDPRVDPILMRPKNTLSPEKAAGSLFCLGTALNLLAQLKEKDQLNTESNVLINGGTSSVGMFAIQLLKRYYKVSKKLVVVTSGNGAAVLSEHFPDLKDEIIFINYLSCRGKSSKPLRRMLDTGKVVDYDDFNTLKETEDYTQGKFNVVLDFIGGYDILSHSSSLIHAKGAYITTVGDYVGNYKKDVFDSWDNPSANARKMFGSMLWSYDYSHFYFDPNIKIIPKKNDWIHECGKLLNEGVVDCVVDKVYSWKNFKEAFSYMATQRAQGKLIMKVEGF.

In terms of biological role, lipid raft-associated protein involved in the targeting of PMA1 from Golgi to the plasma membrane. May induce clustering of PMA1, which facilitates partition of PMA1 into lipid rafts after leaving the ER its and transport to the cell surface. This is Protein AST2 from Saccharomyces cerevisiae (strain ATCC 204508 / S288c) (Baker's yeast).